Consider the following 265-residue polypeptide: Polyphosphate glucokinase (265 aa).

Over residues 1–18 the composition is skewed to polar residues; it reads MTSTGPETSETPGATTQR. Residues 1 to 22 are disordered; the sequence is MTSTGPETSETPGATTQRHGFG. 24 to 29 contacts ATP; the sequence is DVGGSG.

This sequence belongs to the ROK (NagC/XylR) family. In terms of assembly, homodimer.

The enzyme catalyses [phosphate](n) + D-glucose = [phosphate](n-1) + D-glucose 6-phosphate + H(+). It carries out the reaction D-glucose + ATP = D-glucose 6-phosphate + ADP + H(+). Functionally, catalyzes the phosphorylation of glucose using polyphosphate or ATP as the phosphoryl donor. Polyphosphate, rather than ATP, seems to be the major phosphate donor for the enzyme in M.tuberculosis. GTP, UTP and CTP can replace ATP as phosphoryl donor. This is Polyphosphate glucokinase (ppgK) from Mycobacterium tuberculosis (strain ATCC 25177 / H37Ra).